The following is a 372-amino-acid chain: Ciliary neurotrophic factor receptor subunit alpha (372 aa).

The first 22 residues, 1–22 (MAASVPWACCAVLAAAAAAVYT), serve as a signal peptide directing secretion. The Ig-like C2-type domain occupies 27 to 104 (PQEAPHVQYE…WHLRHQVLLH (78 aa)). A disulfide bond links Cys-46 and Cys-89. Residues Asn-60, Asn-70, Asn-142, Asn-190, and Asn-261 are each glycosylated (N-linked (GlcNAc...) asparagine). 2 Fibronectin type-III domains span residues 108 to 205 (PPRE…VKPD) and 206 to 306 (PPEN…TEEP). A WSXWS motif motif is present at residues 290 to 294 (WSDWS). A disordered region spans residues 301 to 339 (PWTEEPRHLTTEAQAPETTTSTTSSLAPPPTTKICDPGE). Low complexity predominate over residues 311–326 (TEAQAPETTTSTTSSL). Ser-342 carries the GPI-anchor amidated serine lipid modification. Residues 343 to 372 (GGGPSIPFLTSVPVTLVLAAAAATANNLLI) constitute a propeptide, removed in mature form.

The protein belongs to the type I cytokine receptor family. Type 3 subfamily. As to quaternary structure, forms a heterotrimer with LIFR and IL6ST. Interacts with heterodimeric neurotropic cytokine composed of CLCF1/CLC and CRLF1/CLF-1. Either alone or in complex with the heterodimer CLCF1-CRLF1 interacts with SORL1; this interaction may promote internalization and lysosomal degradation. Nervous system.

The protein localises to the cell membrane. Functionally, binds to CNTF. The alpha subunit provides the receptor specificity. This is Ciliary neurotrophic factor receptor subunit alpha (Cntfr) from Rattus norvegicus (Rat).